The sequence spans 515 residues: Protein disulfide-isomerase (515 aa).

Positions 1 to 22 are cleaved as a signal peptide; that stretch reads MAVVRVRAIVALLCLVAALGLA. 2 Thioredoxin domains span residues 23-139 and 351-480; these read EPLE…KRTG and FLEG…SGGQ. Residues C58, C61, C402, and C405 each act as nucleophile in the active site. 2 disulfide bridges follow: C58/C61 and C402/C405. Positions 477-515 are disordered; sequence SGGQDGAAADDDLEDLETDEETDLEEGDDDEQKIQKDEL. Residues 484-507 show a composition bias toward acidic residues; that stretch reads AADDDLEDLETDEETDLEEGDDDE. The short motif at 512-515 is the Prevents secretion from ER element; the sequence is KDEL.

It belongs to the protein disulfide isomerase family. In terms of assembly, heterodimer; heterodimerizes with the protein microsomal triglyceride transfer MTTP. Homodimer. Monomers and homotetramers may also occur. Also constitutes the structural subunit of prolyl 4-hydroxylase. Stabilizes this enzyme and retains it in the ER without contributing to the catalytic activity. Binds UBQLN1.

It is found in the endoplasmic reticulum. Its subcellular location is the endoplasmic reticulum lumen. It localises to the cell membrane. It catalyses the reaction Catalyzes the rearrangement of -S-S- bonds in proteins.. Its function is as follows. This multifunctional protein catalyzes the formation, breakage and rearrangement of disulfide bonds. At the cell surface, seems to act as a reductase that cleaves disulfide bonds of proteins attached to the cell. May therefore cause structural modifications of exofacial proteins. Inside the cell, seems to form/rearrange disulfide bonds of nascent proteins. At high concentrations, functions as a chaperone that inhibits aggregation of misfolded proteins. At low concentrations, facilitates aggregation (anti-chaperone activity). Also acts a structural subunit of various enzymes such as prolyl 4-hydroxylase. The chain is Protein disulfide-isomerase (P4HB) from Gallus gallus (Chicken).